Here is a 169-residue protein sequence, read N- to C-terminus: MALPWLFNSSPRAGGPSACACLWPRRYPAAGLRTVPVRVSIQPDGDVLVALPRAAVEDGRFDAAAARRLTAQMRRLVGRVTTTNPLWGIDALQALGEAVTALAGLCSGGVLLWNGFEQMTTGRWAHSAATLALLAAPAALAKLRPWLLGAVAPKLFPLALKAGERIVRI.

This is an uncharacterized protein from Azospirillum brasilense.